The primary structure comprises 97 residues: Co-chaperonin GroES (97 aa).

Belongs to the GroES chaperonin family. Heptamer of 7 subunits arranged in a ring. Interacts with the chaperonin GroEL.

The protein localises to the cytoplasm. In terms of biological role, together with the chaperonin GroEL, plays an essential role in assisting protein folding. The GroEL-GroES system forms a nano-cage that allows encapsulation of the non-native substrate proteins and provides a physical environment optimized to promote and accelerate protein folding. GroES binds to the apical surface of the GroEL ring, thereby capping the opening of the GroEL channel. This chain is Co-chaperonin GroES, found in Burkholderia cepacia (Pseudomonas cepacia).